A 337-amino-acid polypeptide reads, in one-letter code: Beta-glucosidase-like protein NCA3, mitochondrial (337 aa).

Positions 57–67 (ESAATTTTLSS) are enriched in low complexity. Positions 57-84 (ESAATTTTLSSSEKDTSEQKRDGGFQDG) are disordered. Over residues 68-80 (SEKDTSEQKRDGG) the composition is skewed to basic and acidic residues.

Belongs to the SUN family.

It is found in the mitochondrion. Functionally, involved in the mitochondrial expression of subunits 6 and 8 of the F0-F1 ATP synthase. The sequence is that of Beta-glucosidase-like protein NCA3, mitochondrial (NCA3) from Saccharomyces cerevisiae (strain ATCC 204508 / S288c) (Baker's yeast).